Here is a 393-residue protein sequence, read N- to C-terminus: Cysteine protease ATG4B (393 aa).

C73 serves as the catalytic Nucleophile. Active-site residues include D278 and H280. The LIR signature appears at 388–391 (FEIL).

The protein belongs to the peptidase C54 family.

The protein localises to the cytoplasm. Its subcellular location is the cytosol. It localises to the cytoplasmic vesicle. It is found in the autophagosome. The protein resides in the endoplasmic reticulum. The protein localises to the mitochondrion. It catalyses the reaction [protein]-C-terminal L-amino acid-glycyl-phosphatidylethanolamide + H2O = [protein]-C-terminal L-amino acid-glycine + a 1,2-diacyl-sn-glycero-3-phosphoethanolamine. The enzyme catalyses [protein]-C-terminal L-amino acid-glycyl-phosphatidylserine + H2O = [protein]-C-terminal L-amino acid-glycine + a 1,2-diacyl-sn-glycero-3-phospho-L-serine. Functionally, cysteine protease that plays a key role in autophagy by mediating both proteolytic activation and delipidation of ATG8 family proteins. Required for canonical autophagy (macroautophagy), non-canonical autophagy as well as for mitophagy. The protease activity is required for proteolytic activation of ATG8 family proteins: cleaves the C-terminal amino acid of ATG8 proteins to reveal a C-terminal glycine. Exposure of the glycine at the C-terminus is essential for ATG8 proteins conjugation to phosphatidylethanolamine (PE) and insertion to membranes, which is necessary for autophagy. Protease activity is also required to counteract formation of high-molecular weight conjugates of ATG8 proteins (ATG8ylation): acts as a deubiquitinating-like enzyme that removes ATG8 conjugated to other proteins, such as ATG3. In addition to the protease activity, also mediates delipidation of ATG8 family proteins. Catalyzes delipidation of PE-conjugated forms of ATG8 proteins during macroautophagy. Also involved in non-canonical autophagy, a parallel pathway involving conjugation of ATG8 proteins to single membranes at endolysosomal compartments, by catalyzing delipidation of ATG8 proteins conjugated to phosphatidylserine (PS). The polypeptide is Cysteine protease ATG4B (Gallus gallus (Chicken)).